Here is a 142-residue protein sequence, read N- to C-terminus: MAEVSEEIRNLAARHQEFQRQAEALRQEMSMVQASIASCDQAIATINELKAASEAGRAAETMVPVGFGSYVYAEVKNPDKVVVNLGAGFSAEETAEAAVETLNRRKEQLTKILEQMNASLTKIAQGMQALETEAAKIQPGQA.

The protein belongs to the prefoldin subunit alpha family. As to quaternary structure, heterohexamer of two alpha and four beta subunits.

Its subcellular location is the cytoplasm. Its function is as follows. Molecular chaperone capable of stabilizing a range of proteins. Seems to fulfill an ATP-independent, HSP70-like function in archaeal de novo protein folding. In Methanosarcina mazei (strain ATCC BAA-159 / DSM 3647 / Goe1 / Go1 / JCM 11833 / OCM 88) (Methanosarcina frisia), this protein is Prefoldin subunit alpha.